We begin with the raw amino-acid sequence, 216 residues long: Maleylacetoacetate isomerase (216 aa).

The residue at position 1 (methionine 1) is an N-acetylmethionine. In terms of domain architecture, GST N-terminal spans 4–87; the sequence is GKPVLYSYFR…YLEETRPIPR (84 aa). Residues 14–19 and glutamine 45 contribute to the glutathione site; that span reads SSCSWR. Residue lysine 57 is modified to N6-succinyllysine. Glutathione contacts are provided by residues valine 59, 71–72, glutamine 111, and 115–117; these read QS and NLS. The GST C-terminal domain occupies 92 to 212; that stretch reads DPQKRAIVRM…HPCRQPDTPA (121 aa). At threonine 136 the chain carries Phosphothreonine. Position 137 is a phosphoserine (serine 137). An N6-succinyllysine modification is found at lysine 177. The residue at position 181 (serine 181) is a Phosphoserine.

Belongs to the GST superfamily. Zeta family. As to quaternary structure, homodimer. The cofactor is glutathione. In terms of processing, the N-terminus is blocked.

It localises to the cytoplasm. It carries out the reaction 4-maleylacetoacetate = 4-fumarylacetoacetate. It catalyses the reaction RX + glutathione = an S-substituted glutathione + a halide anion + H(+). It participates in amino-acid degradation; L-phenylalanine degradation; acetoacetate and fumarate from L-phenylalanine: step 5/6. Its function is as follows. Probable bifunctional enzyme showing minimal glutathione-conjugating activity with ethacrynic acid and 7-chloro-4-nitrobenz-2-oxa-1, 3-diazole and maleylacetoacetate isomerase activity. Also has low glutathione peroxidase activity with t-butyl and cumene hydroperoxides. Is able to catalyze the glutathione dependent oxygenation of dichloroacetic acid to glyoxylic acid. The protein is Maleylacetoacetate isomerase (Gstz1) of Rattus norvegicus (Rat).